The chain runs to 396 residues: Ribosomal RNA large subunit methyltransferase I (396 aa).

In terms of domain architecture, PUA spans 2–79; the sequence is AVRIKLKPGR…REEEIDREFF (78 aa).

This sequence belongs to the methyltransferase superfamily. RlmI family.

It localises to the cytoplasm. The enzyme catalyses cytidine(1962) in 23S rRNA + S-adenosyl-L-methionine = 5-methylcytidine(1962) in 23S rRNA + S-adenosyl-L-homocysteine + H(+). Specifically methylates the cytosine at position 1962 (m5C1962) of 23S rRNA. This is Ribosomal RNA large subunit methyltransferase I from Shewanella sp. (strain MR-7).